A 215-amino-acid chain; its full sequence is High mobility group protein B1 (215 aa).

Position 1 to 10 (1 to 10 (MGKGDPKKPR)) interacts with heparin. The segment at 1 to 97 (MGKGDPKKPR…KFKDPNAPKR (97 aa)) is sufficient for interaction with HAVCR2. Residues lysine 3, lysine 7, lysine 8, and lysine 12 each carry the N6-acetyllysine modification. Residues 3–15 (KGDPKKPRGKMSS) are LPS binding (delipidated). The HMG box 1 DNA-binding region spans 9-79 (PRGKMSSYAF…RYEREMKTYI (71 aa)). At cysteine 23 the chain carries Cysteine sulfonic acid (-SO3H); alternate. A disulfide bridge links cysteine 23 with cysteine 45. Residues 27–43 (HKKKHPDASVNFSEFSK) are NLS 1. A Nuclear localization signal (NLS) 1 motif is present at residues 27 to 43 (HKKKHPDASVNFSEFSK). An N6-acetyllysine mark is found at lysine 28, lysine 29, and lysine 30. Lysine 28 participates in a covalent cross-link: Isoglutamyl lysine isopeptide (Lys-Gln) (interchain with Q-?). Serine 35 carries the post-translational modification Phosphoserine. Lysine 43 bears the N6-acetyllysine mark. Isoglutamyl lysine isopeptide (Lys-Gln) (interchain with Q-?) cross-links involve residues lysine 43 and lysine 44. Cysteine 45 carries the cysteine sulfonic acid (-SO3H); alternate modification. An Isoglutamyl lysine isopeptide (Lys-Gln) (interchain with Q-?) cross-link involves residue lysine 68. Residues 76–95 (KTYIPPKGETKKKFKDPNAP) form a disordered region. An LPS binding (Lipid A) region spans residues 80 to 96 (PPKGETKKKFKDPNAPK). Residues 83 to 94 (GETKKKFKDPNA) are compositionally biased toward basic and acidic residues. Positions 89–108 (FKDPNAPKRPPSAFFLFCSE) are cytokine-stimulating activity. Residue lysine 90 is modified to N6-acetyllysine. The HMG box 2 DNA-binding region spans 95–163 (PKRPPSAFFL…KYEKDIAAYR (69 aa)). Serine 100 carries the phosphoserine modification. Cysteine 106 carries the cysteine sulfonic acid (-SO3H) modification. An N6-acetyllysine mark is found at lysine 127, lysine 128, lysine 141, lysine 172, lysine 173, lysine 177, and lysine 180. The tract at residues 150–183 (KLKEKYEKDIAAYRAKGKPDAAKKGVVKAEKSKK) is binding to AGER/RAGE. A compositionally biased stretch (basic and acidic residues) spans 161–179 (AYRAKGKPDAAKKGVVKAE). The segment at 161 to 215 (AYRAKGKPDAAKKGVVKAEKSKKKKEEEDDEEDEEDEEEEEEEEDEDEEEDDDDE) is disordered. The segment at 178-184 (AEKSKKK) is NLS 2. The Nuclear localization signal (NLS) 2 motif lies at 178–184 (AEKSKKK). Residue lysine 180 forms an Isoglutamyl lysine isopeptide (Lys-Gln) (interchain with Q-?) linkage. Serine 181 bears the ADP-ribosylserine mark. An N6-acetyllysine mark is found at lysine 182, lysine 183, lysine 184, and lysine 185. Isoglutamyl lysine isopeptide (Lys-Gln) (interchain with Q-?) cross-links involve residues lysine 182, lysine 183, and lysine 184. A compositionally biased stretch (acidic residues) spans 187–215 (EEDDEEDEEDEEEEEEEEDEDEEEDDDDE).

It belongs to the HMGB family. In terms of assembly, interacts (fully reduced HMGB1) with CXCL12; probably in a 1:2 ratio involving two molecules of CXCL12, each interacting with one HMG box of HMGB1; inhibited by glycyrrhizin. Associates with the TLR4:LY96 receptor complex. Component of the RAG complex composed of core components RAG1 and RAG2, and associated component HMGB1 or HMGB2. Interacts (in cytoplasm upon starvation) with BECN1; inhibits the interaction of BECN1 and BCL2 leading to promotion of autophagy. Interacts with KPNA1; involved in nuclear import. Interacts with SREBF1, TLR2, TLR4, TLR9, APEX1, FEN1, POLB, TERT. Interacts with AGER, PTPRZ1, IL1B, MSH2, XPA, XPC, HNF1A, TP53. Interacts with CD24; the probable CD24:SIGLEC10 complex is proposed to inhibit HGMB1-mediated tissue damage immune response. Interacts with THBD; prevents HGMB1 interaction with ACER/RAGE and inhibits HGMB1 pro-inflammatory activity. Interacts with HAVCR2; impairs HMGB1 binding to B-DNA and likely HMGB1-mediated innate immune response. Interacts with XPO1; mediating nuclear export. Interacts with receptor RAGE/AGER. In terms of processing, acetylated on multiple sites upon stimulation with LPS. Acetylation on lysine residues in the nuclear localization signals (NLS 1 and NLS 2) leads to cytoplasmic localization and subsequent secretion. Acetylation on Lys-3 results in preferential binding to DNA ends and impairs DNA bending activity. Phosphorylated at serine residues. Phosphorylation in both NLS regions is required for cytoplasmic translocation followed by secretion. Post-translationally, reduction/oxidation of cysteine residues Cys-23, Cys-45 and Cys-106 and a possible intramolecular disulfide bond involving Cys-23 and Cys-45 give rise to different redox forms with specific functional activities in various cellular compartments: 1- Fully reduced HGMB1 (HMGB1C23hC45hC106h), 2- Disulfide HMGB1 (HMGB1C23-C45C106h) and 3- Sulfonyl HMGB1 (HMGB1C23soC45soC106so). In terms of processing, poly-ADP-ribosylated by PARP1 when secreted following stimulation with LPS. In vitro cleavage by CASP1 is liberating a HMG box 1-containing peptide which may mediate immunogenic activity; the peptide antagonizes apoptosis-induced immune tolerance. Can be proteolytically cleaved by a thrombin:thrombomodulin complex; reduces binding to heparin and pro-inflammatory activities. Post-translationally, forms covalent cross-links mediated by transglutaminase TGM2, between a glutamine and the epsilon-amino group of a lysine residue, forming homopolymers and heteropolymers. Serum levels are found elevated in mice with modeled systemic lupus erythematosus (SLE) and are correlated with SLE disease activity.

Its subcellular location is the nucleus. It localises to the cytoplasm. It is found in the chromosome. The protein localises to the cell membrane. The protein resides in the endosome. Its subcellular location is the endoplasmic reticulum-Golgi intermediate compartment. It localises to the secreted. Functionally, multifunctional redox sensitive protein with various roles in different cellular compartments. In the nucleus is one of the major chromatin-associated non-histone proteins and acts as a DNA chaperone involved in replication, transcription, chromatin remodeling, V(D)J recombination, DNA repair and genome stability. Proposed to be an universal biosensor for nucleic acids. Promotes host inflammatory response to sterile and infectious signals and is involved in the coordination and integration of innate and adaptive immune responses. In the cytoplasm functions as a sensor and/or chaperone for immunogenic nucleic acids implicating the activation of TLR9-mediated immune responses, and mediates autophagy. Acts as a danger associated molecular pattern (DAMP) molecule that amplifies immune responses during tissue injury. Released to the extracellular environment can bind DNA, nucleosomes, IL-1 beta, CXCL12, AGER isoform 2/sRAGE, lipopolysaccharide (LPS) and lipoteichoic acid (LTA), and activates cells through engagement of multiple surface receptors. In the extracellular compartment fully reduced HMGB1 (released by necrosis) acts as a chemokine, disulfide HMGB1 (actively secreted) as a cytokine, and sulfonyl HMGB1 (released from apoptotic cells) promotes immunological tolerance. Has proangiogenic activity. May be involved in platelet activation. Binds to phosphatidylserine and phosphatidylethanolamide. Bound to RAGE mediates signaling for neuronal outgrowth. May play a role in accumulation of expanded polyglutamine (polyQ) proteins. Nuclear functions are attributed to fully reduced HGMB1. Associates with chromatin and binds DNA with a preference to non-canonical DNA structures such as single-stranded DNA, DNA-containing cruciforms or bent structures, supercoiled DNA and ZDNA. Can bent DNA and enhance DNA flexibility by looping thus providing a mechanism to promote activities on various gene promoters by enhancing transcription factor binding and/or bringing distant regulatory sequences into close proximity. May be involved in nucleotide excision repair (NER), mismatch repair (MMR) and base excision repair (BER) pathways, and double strand break repair such as non-homologous end joining (NHEJ). Involved in V(D)J recombination by acting as a cofactor of the RAG complex: acts by stimulating cleavage and RAG protein binding at the 23 bp spacer of conserved recombination signal sequences (RSS). In vitro can displace histone H1 from highly bent DNA. Can restructure the canonical nucleosome leading to relaxation of structural constraints for transcription factor-binding. Enhances binding of sterol regulatory element-binding proteins (SREBPs) such as SREBF1 to their cognate DNA sequences and increases their transcriptional activities. Facilitates binding of TP53 to DNA. Proposed to be involved in mitochondrial quality control and autophagy in a transcription-dependent fashion implicating HSPB1; however, this function has been questioned. Can modulate the activity of the telomerase complex and may be involved in telomere maintenance. In terms of biological role, in the cytoplasm proposed to dissociate the BECN1:BCL2 complex via competitive interaction with BECN1 leading to autophagy activation. Can protect BECN1 and ATG5 from calpain-mediated cleavage and thus proposed to control their proautophagic and proapoptotic functions and to regulate the extent and severity of inflammation-associated cellular injury. In myeloid cells has a protective role against endotoxemia and bacterial infection by promoting autophagy. Involved in endosomal translocation and activation of TLR9 in response to CpG-DNA in macrophages. Its function is as follows. In the extracellular compartment (following either active secretion or passive release) involved in regulation of the inflammatory response. Fully reduced HGMB1 (which subsequently gets oxidized after release) in association with CXCL12 mediates the recruitment of inflammatory cells during the initial phase of tissue injury; the CXCL12:HMGB1 complex triggers CXCR4 homodimerization. Induces the migration of monocyte-derived immature dendritic cells and seems to regulate adhesive and migratory functions of neutrophils implicating AGER/RAGE and ITGAM. Can bind to various types of DNA and RNA including microbial unmethylated CpG-DNA to enhance the innate immune response to nucleic acids. Proposed to act in promiscuous DNA/RNA sensing which cooperates with subsequent discriminative sensing by specific pattern recognition receptors. Promotes extracellular DNA-induced AIM2 inflammasome activation implicating AGER/RAGE. Disulfide HMGB1 binds to transmembrane receptors, such as AGER/RAGE, TLR2, TLR4 and probably TREM1, thus activating their signal transduction pathways. Mediates the release of cytokines/chemokines such as TNF, IL-1, IL-6, IL-8, CCL2, CCL3, CCL4 and CXCL10. Promotes secretion of interferon-gamma by macrophage-stimulated natural killer (NK) cells in concert with other cytokines like IL-2 or IL-12. TLR4 is proposed to be the primary receptor promoting macrophage activation and signaling through TLR4 seems to implicate LY96/MD-2. In bacterial LPS- or LTA-mediated inflammatory responses binds to the endotoxins and transfers them to CD14 for signaling to the respective TLR4:LY96 and TLR2 complexes. Contributes to tumor proliferation by association with ACER/RAGE. Can bind to IL1-beta and signals through the IL1R1:IL1RAP receptor complex. Binding to class A CpG activates cytokine production in plasmacytoid dendritic cells implicating TLR9, MYD88 and AGER/RAGE and can activate autoreactive B cells. Via HMGB1-containing chromatin immune complexes may also promote B cell responses to endogenous TLR9 ligands through a B-cell receptor (BCR)-dependent and ACER/RAGE-independent mechanism. Inhibits phagocytosis of apoptotic cells by macrophages; the function is dependent on poly-ADP-ribosylation and involves binding to phosphatidylserine on the cell surface of apoptotic cells. In adaptive immunity may be involved in enhancing immunity through activation of effector T-cells and suppression of regulatory T (TReg) cells. In contrast, without implicating effector or regulatory T-cells, required for tumor infiltration and activation of T-cells expressing the lymphotoxin LTA:LTB heterotrimer thus promoting tumor malignant progression. Also reported to limit proliferation of T-cells. Released HMGB1:nucleosome complexes formed during apoptosis can signal through TLR2 to induce cytokine production. Involved in induction of immunological tolerance by apoptotic cells; its pro-inflammatory activities when released by apoptotic cells are neutralized by reactive oxygen species (ROS)-dependent oxidation specifically on Cys-106. During macrophage activation by activated lymphocyte-derived self apoptotic DNA (ALD-DNA) promotes recruitment of ALD-DNA to endosomes. The sequence is that of High mobility group protein B1 (Hmgb1) from Mus musculus (Mouse).